Consider the following 800-residue polypeptide: DNA topoisomerase 4 subunit A (800 aa).

The Topo IIA-type catalytic domain occupies 31 to 495; it reads LPDVRDGLKP…EIEEIKIDKE (465 aa). The O-(5'-phospho-DNA)-tyrosine intermediate role is filled by Y119.

This sequence belongs to the type II topoisomerase GyrA/ParC subunit family. ParC type 2 subfamily. In terms of assembly, heterotetramer composed of ParC and ParE.

Its subcellular location is the cell membrane. The enzyme catalyses ATP-dependent breakage, passage and rejoining of double-stranded DNA.. Topoisomerase IV is essential for chromosome segregation. It relaxes supercoiled DNA. Performs the decatenation events required during the replication of a circular DNA molecule. In Staphylococcus aureus (strain Mu50 / ATCC 700699), this protein is DNA topoisomerase 4 subunit A.